The sequence spans 79 residues: Large ribosomal subunit protein uL24 (79 aa).

The protein belongs to the universal ribosomal protein uL24 family. Part of the 50S ribosomal subunit.

In terms of biological role, one of two assembly initiator proteins, it binds directly to the 5'-end of the 23S rRNA, where it nucleates assembly of the 50S subunit. Its function is as follows. One of the proteins that surrounds the polypeptide exit tunnel on the outside of the subunit. The polypeptide is Large ribosomal subunit protein uL24 (Lactobacillus delbrueckii subsp. bulgaricus (strain ATCC 11842 / DSM 20081 / BCRC 10696 / JCM 1002 / NBRC 13953 / NCIMB 11778 / NCTC 12712 / WDCM 00102 / Lb 14)).